The sequence spans 277 residues: Energy-coupling factor transporter ATP-binding protein EcfA1 (277 aa).

Residues 5-243 (IRAQNVSFCY…VEVLKKIGLD (239 aa)) enclose the ABC transporter domain. 42–49 (GHNGSGKS) contributes to the ATP binding site.

It belongs to the ABC transporter superfamily. Energy-coupling factor EcfA family. Forms a stable energy-coupling factor (ECF) transporter complex composed of 2 membrane-embedded substrate-binding proteins (S component), 2 ATP-binding proteins (A component) and 2 transmembrane proteins (T component).

Its subcellular location is the cell membrane. In terms of biological role, ATP-binding (A) component of a common energy-coupling factor (ECF) ABC-transporter complex. Unlike classic ABC transporters this ECF transporter provides the energy necessary to transport a number of different substrates. The chain is Energy-coupling factor transporter ATP-binding protein EcfA1 from Caldanaerobacter subterraneus subsp. tengcongensis (strain DSM 15242 / JCM 11007 / NBRC 100824 / MB4) (Thermoanaerobacter tengcongensis).